Consider the following 341-residue polypeptide: MHISIVGITGYTGLELLRLALNHPHVTVSSIHATKEVGVQISDIFPHLKGIFDKEIQVFDSEFIMTHSDLVFFATPSGVAKDLSKNFVKNNFPVIDLSGDHRLSPDVYLKWYKKSPCTVDIQKRFTYGLSEVMNISHRNRFIANPGCYATATELALYPIISNHLIRVDSIIVDAKSGLTGAGKKLNQSSHYVNVNNNYVTYKLNKHQHIPEIVQTLQFFNKSLQNIQFSTSLIPVNRGIVATIYTRLENGVKINQIESTYKDVYKNKPFIRIKDGLPQLNEVIGTNYTDIGFVYNETTGVLTISSVIDNLIKGAAGQAIQNMNLMFNFDETDGLILAPLYI.

Cys-147 is a catalytic residue.

This sequence belongs to the NAGSA dehydrogenase family. Type 1 subfamily.

It localises to the cytoplasm. The catalysed reaction is N-acetyl-L-glutamate 5-semialdehyde + phosphate + NADP(+) = N-acetyl-L-glutamyl 5-phosphate + NADPH + H(+). Its pathway is amino-acid biosynthesis; L-arginine biosynthesis; N(2)-acetyl-L-ornithine from L-glutamate: step 3/4. In terms of biological role, catalyzes the NADPH-dependent reduction of N-acetyl-5-glutamyl phosphate to yield N-acetyl-L-glutamate 5-semialdehyde. The chain is N-acetyl-gamma-glutamyl-phosphate reductase from Staphylococcus epidermidis (strain ATCC 35984 / DSM 28319 / BCRC 17069 / CCUG 31568 / BM 3577 / RP62A).